A 392-amino-acid chain; its full sequence is MSQHPEAIAAHGGQLVNRVATPAQREEFVSKAEFLPRVQLDERAVSDLEMIAIGGFSPLTGFMNQEDYDRVVSEMRLANGLVWSIPITLSVSEEVASSLQEGGLVRLDNPAGDYIGVLQLTQKYRYDKTREAINVYRTDDAKHPGVQVLYNQGAVNLAGDIWLLERSSHPLFPDYQIDPVASRQMFRDKGWKTIVGFQTRNPIHRAHEYIQKCALETVDGLFLHPLVGATKEDDIAADVRMRCYEILLEHYYPEDRVILAINPAAMRYAGPREAIFHALVRKNYGCTHFIVGRDHAGVGDYYGTYDAQYIFDEFEPGELGIVPMKFEHAFYCTRTKQMATTKTSPSRPEERVHLSGTKVREMLRRGELPPPEFSRPEVAAELARAMRVQVLA.

The protein belongs to the sulfate adenylyltransferase family.

The catalysed reaction is sulfate + ATP + H(+) = adenosine 5'-phosphosulfate + diphosphate. It functions in the pathway sulfur metabolism; hydrogen sulfide biosynthesis; sulfite from sulfate: step 1/3. In Trichormus variabilis (strain ATCC 29413 / PCC 7937) (Anabaena variabilis), this protein is Sulfate adenylyltransferase.